The sequence spans 141 residues: Hemoglobin subunit alpha (141 aa).

The region spanning 1–141 is the Globin domain; that stretch reads VLSAADKAHV…VSTVLTSKYR (141 aa). At S3 the chain carries Phosphoserine. N6-succinyllysine is present on residues K7 and K11. At K16 the chain carries N6-acetyllysine; alternate. The residue at position 16 (K16) is an N6-succinyllysine; alternate. Residue Y24 is modified to Phosphotyrosine. S35 carries the post-translational modification Phosphoserine. At K40 the chain carries N6-succinyllysine. Phosphoserine is present on S49. H58 contacts O2. Residue H87 coordinates heme b. Phosphothreonine is present on T108. The residue at position 124 (S124) is a Phosphoserine. T134 and T137 each carry phosphothreonine. At S138 the chain carries Phosphoserine.

It belongs to the globin family. Heterotetramer of two alpha chains and two beta chains. In terms of tissue distribution, red blood cells.

Involved in oxygen transport from the lung to the various peripheral tissues. In terms of biological role, hemopressin acts as an antagonist peptide of the cannabinoid receptor CNR1. Hemopressin-binding efficiently blocks cannabinoid receptor CNR1 and subsequent signaling. In Bradypus tridactylus (Pale-throated three-toed sloth), this protein is Hemoglobin subunit alpha (HBA).